The sequence spans 853 residues: ATP-dependent zinc metalloprotease FtsH (853 aa).

The Cytoplasmic portion of the chain corresponds to 1–5 (MKNKK). The helical transmembrane segment at 6–26 (YLQFGGIAAVILIVLFLVSLF) threads the bilayer. The Extracellular segment spans residues 27 to 113 (SSDTRNFQEV…SYTTNVTQES (87 aa)). The chain crosses the membrane as a helical span at residues 114 to 134 (FLMSMLSFILPMVIIFGLLMF). Residues 135–853 (FLTRMQGGGM…NPENEGDNRG (719 aa)) are Cytoplasmic-facing. Residue 205–212 (GPPGTGKT) participates in ATP binding. A Zn(2+)-binding site is contributed by His-427. Residue Glu-428 is part of the active site. Zn(2+) contacts are provided by His-431 and Asp-503. Composition is skewed to basic and acidic residues over residues 619–632 (ESTR…REPV) and 639–648 (ALERGEEPPK). Residues 619-853 (ESTRFPRQEN…NPENEGDNRG (235 aa)) are disordered. Residues 677–695 (PASSAGVAPAAGAAAGSYG) are compositionally biased toward low complexity. Composition is skewed to polar residues over residues 728–739 (TPAQAPEQSPDS) and 770–788 (MDQS…QESP). Over residues 796–813 (LPDHERSDYPEKAQKESV) the composition is skewed to basic and acidic residues.

The protein in the central section; belongs to the AAA ATPase family. This sequence in the C-terminal section; belongs to the peptidase M41 family. Homohexamer. Requires Zn(2+) as cofactor.

Its subcellular location is the cell membrane. Functionally, acts as a processive, ATP-dependent zinc metallopeptidase for both cytoplasmic and membrane proteins. Plays a role in the quality control of integral membrane proteins. The chain is ATP-dependent zinc metalloprotease FtsH from Corynebacterium glutamicum (strain ATCC 13032 / DSM 20300 / JCM 1318 / BCRC 11384 / CCUG 27702 / LMG 3730 / NBRC 12168 / NCIMB 10025 / NRRL B-2784 / 534).